The primary structure comprises 260 residues: Proteasome subunit alpha (260 aa).

It belongs to the peptidase T1A family. In terms of assembly, the 20S proteasome core is composed of 14 alpha and 14 beta subunits that assemble into four stacked heptameric rings, resulting in a barrel-shaped structure. The two inner rings, each composed of seven catalytic beta subunits, are sandwiched by two outer rings, each composed of seven alpha subunits. The catalytic chamber with the active sites is on the inside of the barrel. Has a gated structure, the ends of the cylinder being occluded by the N-termini of the alpha-subunits. Is capped at one or both ends by the proteasome regulatory ATPase, PAN.

It localises to the cytoplasm. With respect to regulation, the formation of the proteasomal ATPase PAN-20S proteasome complex, via the docking of the C-termini of PAN into the intersubunit pockets in the alpha-rings, triggers opening of the gate for substrate entry. Interconversion between the open-gate and close-gate conformations leads to a dynamic regulation of the 20S proteasome proteolysis activity. In terms of biological role, component of the proteasome core, a large protease complex with broad specificity involved in protein degradation. This Pyrococcus abyssi (strain GE5 / Orsay) protein is Proteasome subunit alpha.